Reading from the N-terminus, the 589-residue chain is Lipoprotein LpqB (589 aa).

Positions 1–20 (MMRGVLVIMRLLCLGMLFTG) are cleaved as a signal peptide. A lipid anchor (N-palmitoyl cysteine) is attached at Cys-21. Cys-21 carries S-diacylglycerol cysteine lipidation.

Belongs to the LpqB lipoprotein family.

It localises to the cell membrane. The polypeptide is Lipoprotein LpqB (Mycobacterium leprae (strain TN)).